The sequence spans 114 residues: Photosystem II reaction center Psb28 protein (114 aa).

Belongs to the Psb28 family. Part of the photosystem II complex.

The protein localises to the cellular thylakoid membrane. The protein is Photosystem II reaction center Psb28 protein of Rippkaea orientalis (strain PCC 8801 / RF-1) (Cyanothece sp. (strain PCC 8801)).